A 190-amino-acid chain; its full sequence is uncharacterized protein (190 aa).

The signal sequence occupies residues 1 to 28 (MEFSLQYITIFIFVILFLIGLFSSKSRS).

This is an uncharacterized protein from Haemophilus influenzae (strain ATCC 51907 / DSM 11121 / KW20 / Rd).